A 154-amino-acid chain; its full sequence is Aspartate carbamoyltransferase regulatory chain (154 aa).

The Zn(2+) site is built by cysteine 111, cysteine 116, cysteine 139, and cysteine 142.

This sequence belongs to the PyrI family. As to quaternary structure, contains catalytic and regulatory chains. Zn(2+) serves as cofactor.

Functionally, involved in allosteric regulation of aspartate carbamoyltransferase. This chain is Aspartate carbamoyltransferase regulatory chain, found in Parabacteroides distasonis (strain ATCC 8503 / DSM 20701 / CIP 104284 / JCM 5825 / NCTC 11152).